The primary structure comprises 424 residues: D-inositol 3-phosphate glycosyltransferase (424 aa).

1D-myo-inositol 3-phosphate is bound by residues histidine 9, 20–25 (DAGGMN), lysine 78, tyrosine 110, threonine 134, and arginine 154. Glycine 23 provides a ligand contact to UDP-N-acetyl-alpha-D-glucosamine. Positions 231, 236, and 295 each coordinate UDP-N-acetyl-alpha-D-glucosamine. Mg(2+) contacts are provided by tyrosine 304, glutamine 305, and alanine 307. UDP-N-acetyl-alpha-D-glucosamine-binding residues include glutamate 317 and glutamate 325. Mg(2+) is bound at residue threonine 331.

This sequence belongs to the glycosyltransferase group 1 family. MshA subfamily. In terms of assembly, homodimer.

It catalyses the reaction 1D-myo-inositol 3-phosphate + UDP-N-acetyl-alpha-D-glucosamine = 1D-myo-inositol 2-acetamido-2-deoxy-alpha-D-glucopyranoside 3-phosphate + UDP + H(+). Its function is as follows. Catalyzes the transfer of a N-acetyl-glucosamine moiety to 1D-myo-inositol 3-phosphate to produce 1D-myo-inositol 2-acetamido-2-deoxy-glucopyranoside 3-phosphate in the mycothiol biosynthesis pathway. The protein is D-inositol 3-phosphate glycosyltransferase of Corynebacterium urealyticum (strain ATCC 43042 / DSM 7109).